The chain runs to 778 residues: GRIP and coiled-coil domain-containing protein 1 (778 aa).

A coiled-coil region spans residues 13 to 61 (SKKDLLETIETQKKQLLQYQARLKDVVRAYKSLLKEKEALEASIKVLSV). 3 disordered regions span residues 70–157 (SGVQ…MDKR), 186–208 (YLADKKKMKQDLEDANKKAEEER), and 617–638 (GRRSPVGGVGGGGLGDPADTAS). Residues 83–93 (VDDRCSTHSED) are compositionally biased toward basic and acidic residues. 2 stretches are compositionally biased toward low complexity: residues 94–109 (STGTATSLDTAASLTS) and 133–152 (ASGSESGVSSSSGDGPSAGS). Residues 152-702 (SEMDKRVHQL…EEGERHREEV (551 aa)) are a coiled coil. The region spanning 716 to 766 (QSREGANLEYLKNIIYRFLTLPDSLGRQQTLTAILTILHFSPEEKQVLMRL) is the GRIP domain.

It localises to the cytoplasm. The protein localises to the golgi apparatus membrane. Functionally, probably involved in maintaining Golgi structure. The chain is GRIP and coiled-coil domain-containing protein 1 (Gcc1) from Mus musculus (Mouse).